Here is a 418-residue protein sequence, read N- to C-terminus: Protein-lysine N-trimethyltransferase SMYD5 (418 aa).

The 332-residue stretch at Val21–Leu352 folds into the SET domain. The segment at Pro98–Cys136 adopts an MYND-type zinc-finger fold. Tyr351 serves as a coordination point for S-adenosyl-L-methionine. Positions Ala385 to Val418 are disordered.

Belongs to the class V-like SAM-binding methyltransferase superfamily. In terms of assembly, interacts with the N-CoR complex. Interacts with EHMT2 and CBX5. Ubiquitinated and degradaed by the proteasome in response to mild hypothermia (32 degrees Celsius), relieving repression of the SP1 gene.

It localises to the cytoplasm. It catalyses the reaction L-lysyl-[protein] + 3 S-adenosyl-L-methionine = N(6),N(6),N(6)-trimethyl-L-lysyl-[protein] + 3 S-adenosyl-L-homocysteine + 3 H(+). The catalysed reaction is L-lysyl(20)-[histone H4] + 3 S-adenosyl-L-methionine = N(6),N(6),N(6)-trimethyl-L-lysyl(20)-[histone H4] + 3 S-adenosyl-L-homocysteine + 3 H(+). The enzyme catalyses L-lysyl(36)-[histone H3] + 3 S-adenosyl-L-methionine = N(6),N(6),N(6)-trimethyl-L-lysyl(36)-[histone H3] + 3 S-adenosyl-L-homocysteine + 3 H(+). Its function is as follows. Protein-lysine N-trimethyltransferase that specifically catalyzes trimethylation of 'Lys-22' of the RPL40/eL40 subunit of the 60S ribosome, thereby promoting translation elongation and protein synthesis. May also act as a histone methyltransferase in the context of histone octamers, but not on nucleosome substrates: trimethylates 'Lys-36' of histone H3 and 'Lys-20' of histone H4 to form H3K36me3 and H4K20me3, respectively. The histone methyltransferase activity, which is independent of its SET domain, is however unsure in vivo. In association with the NCoR corepressor complex, involved in the repression of toll-like receptor 4 (TLR4)-target inflammatory genes in macrophages, possibly by catalyzing the formation of H4K20me3 at the gene promoters. Plays an important role in embryonic stem (ES) cell self-renewal and differentiation. Maintains genome stability of ES cells during differentiation through regulation of heterochromatin formation and repression of endogenous repetitive DNA elements by promoting H4K20me3 marks. Acts as a regulator of the hypothermia response: its degradation in response to mild hypothermia relieves the formation of H3K36me3 at gene promoters, allowing expression of the neuroprotective gene SP1. This is Protein-lysine N-trimethyltransferase SMYD5 from Homo sapiens (Human).